The following is a 338-amino-acid chain: Glycerol-3-phosphate dehydrogenase [NAD(P)+] (338 aa).

4 residues coordinate NADPH: Ser14, Tyr15, His35, and Lys109. Lys109, Gly138, and Thr140 together coordinate sn-glycerol 3-phosphate. Residue Ala142 participates in NADPH binding. Sn-glycerol 3-phosphate-binding residues include Lys194, Asp247, Ser257, Arg258, and Asn259. Catalysis depends on Lys194, which acts as the Proton acceptor. Arg258 provides a ligand contact to NADPH. NADPH contacts are provided by Val282 and Glu284.

This sequence belongs to the NAD-dependent glycerol-3-phosphate dehydrogenase family.

Its subcellular location is the cytoplasm. The enzyme catalyses sn-glycerol 3-phosphate + NAD(+) = dihydroxyacetone phosphate + NADH + H(+). It catalyses the reaction sn-glycerol 3-phosphate + NADP(+) = dihydroxyacetone phosphate + NADPH + H(+). It participates in membrane lipid metabolism; glycerophospholipid metabolism. Catalyzes the reduction of the glycolytic intermediate dihydroxyacetone phosphate (DHAP) to sn-glycerol 3-phosphate (G3P), the key precursor for phospholipid synthesis. This Shewanella sp. (strain MR-4) protein is Glycerol-3-phosphate dehydrogenase [NAD(P)+].